The following is a 421-amino-acid chain: Putative leucine-rich repeat protein R380 (421 aa).

7 LRR repeats span residues 48-69 (YLEKLFINNNNLKQLPDPQYLP), 70-85 (KIKELVCSYNILTHIP), 89-110 (NLIKLDISHNQVQNINVYNQSK), 111-129 (LLYLDCSFNKNIETRIFLP), 130-150 (ECRELYVNDANISKLEINYFP), 151-172 (NLRILDCSNNNISRISSLSSLI), and 173-191 (ELNIQNNHITELPSYPQLV).

This is Putative leucine-rich repeat protein R380 from Acanthamoeba polyphaga (Amoeba).